The chain runs to 217 residues: MSSITAKLVKDLRDKTGAGMMDCKKALAETSGDISKAVEWLRQKGIASAEKKSGRVAAEGAIGSYIHTGSRVGVLIELNCETDFVARGELFQGLLRDVSMQVAACPNVEYVAVDDIPKDIVDKEKNIEMGRDDLAGKPEQIKTKIVEGRIGKRLKELALIEQPFIRDSSITVEQLVKQVAGQIGENVKVRRFTRYTLGEGIEVEESDFAAEVASMSS.

Positions 82-85 (TDFV) are involved in Mg(2+) ion dislocation from EF-Tu.

Belongs to the EF-Ts family.

It is found in the cytoplasm. Functionally, associates with the EF-Tu.GDP complex and induces the exchange of GDP to GTP. It remains bound to the aminoacyl-tRNA.EF-Tu.GTP complex up to the GTP hydrolysis stage on the ribosome. In Prochlorococcus marinus (strain SARG / CCMP1375 / SS120), this protein is Elongation factor Ts.